The sequence spans 360 residues: Secreted LysM effector LysM2 (360 aa).

A signal peptide spans Met1–Gly21. One can recognise a LysM 1 domain in the interval Thr37–Val85. Residues Ala94–Ala113 show a composition bias toward low complexity. Positions Ala94–Gly125 are disordered. N-linked (GlcNAc...) asparagine glycosylation occurs at Asn129. One can recognise a LysM 2 domain in the interval Lys132–Val179. An N-linked (GlcNAc...) asparagine glycan is attached at Asn204. LysM domains lie at Arg225–Ile272 and Lys311–Val357.

It belongs to the secreted LysM effector family.

The protein resides in the secreted. It is found in the cell wall. Its function is as follows. Secreted effector that binds two substrates, chitin and N-linked oligosaccharides associated with human skin glycoproteins. Could provide the pathogen with three important functions including shielding host cell wall chitin from the human immune system, shielding the pathogen's glycoproteins from host degradation and immune surveillance, and helping facilitate pathogen adhesion to human skin. In Trichophyton rubrum (strain ATCC MYA-4607 / CBS 118892) (Athlete's foot fungus), this protein is Secreted LysM effector LysM2.